Consider the following 203-residue polypeptide: LexA repressor (203 aa).

The segment at residues 28 to 47 (IREIGDEFGITAKGAYDHLK) is a DNA-binding region (H-T-H motif). Catalysis depends on for autocatalytic cleavage activity residues Ser127 and Lys164.

The protein belongs to the peptidase S24 family. As to quaternary structure, homodimer.

It catalyses the reaction Hydrolysis of Ala-|-Gly bond in repressor LexA.. Represses a number of genes involved in the response to DNA damage (SOS response), including recA and lexA. In the presence of single-stranded DNA, RecA interacts with LexA causing an autocatalytic cleavage which disrupts the DNA-binding part of LexA, leading to derepression of the SOS regulon and eventually DNA repair. The protein is LexA repressor of Leptospira borgpetersenii serovar Hardjo-bovis (strain JB197).